A 120-amino-acid polypeptide reads, in one-letter code: Chaperonin GroEL (120 aa).

ATP is bound at residue 23-27 (DGTTT).

The protein belongs to the chaperonin (HSP60) family. As to quaternary structure, forms a cylinder of 14 subunits composed of two heptameric rings stacked back-to-back. Interacts with the co-chaperonin GroES.

It is found in the cytoplasm. The enzyme catalyses ATP + H2O + a folded polypeptide = ADP + phosphate + an unfolded polypeptide.. Its function is as follows. Together with its co-chaperonin GroES, plays an essential role in assisting protein folding. The GroEL-GroES system forms a nano-cage that allows encapsulation of the non-native substrate proteins and provides a physical environment optimized to promote and accelerate protein folding. This Mycobacterium scrofulaceum protein is Chaperonin GroEL.